We begin with the raw amino-acid sequence, 190 residues long: Nucleoside triphosphate pyrophosphatase (190 aa).

The Proton acceptor role is filled by Asp-69.

This sequence belongs to the Maf family. A divalent metal cation is required as a cofactor.

Its subcellular location is the cytoplasm. It catalyses the reaction a ribonucleoside 5'-triphosphate + H2O = a ribonucleoside 5'-phosphate + diphosphate + H(+). The catalysed reaction is a 2'-deoxyribonucleoside 5'-triphosphate + H2O = a 2'-deoxyribonucleoside 5'-phosphate + diphosphate + H(+). In terms of biological role, nucleoside triphosphate pyrophosphatase. May have a dual role in cell division arrest and in preventing the incorporation of modified nucleotides into cellular nucleic acids. This is Nucleoside triphosphate pyrophosphatase from Helicobacter pylori (strain P12).